A 56-amino-acid polypeptide reads, in one-letter code: Large ribosomal subunit protein bL32 (56 aa).

Residues 1–56 (MAVPARRTSKAKKNKRRTHKGLTTPGLSRDSETGEYRMSHRISPDGTYKGRTIIEK) are disordered. Residues 7–20 (RTSKAKKNKRRTHK) are compositionally biased toward basic residues. The span at 29–38 (RDSETGEYRM) shows a compositional bias: basic and acidic residues.

It belongs to the bacterial ribosomal protein bL32 family.

The protein is Large ribosomal subunit protein bL32 of Listeria monocytogenes serotype 4a (strain HCC23).